The following is a 548-amino-acid chain: Splicing factor U2af large subunit B (548 aa).

Over residues 1–82 (MADDHAAAAD…DRDRDRDKDR (82 aa)) the composition is skewed to basic and acidic residues. Positions 1–156 (MADDHAAAAD…SKRVSGFDMA (156 aa)) are disordered. The segment covering 83 to 93 (DRHHRHHRERR) has biased composition (basic residues). The segment covering 94 to 120 (EHRDRSDDHDRHRSRDSERRRDHERDG) has biased composition (basic and acidic residues). A compositionally biased stretch (basic residues) spans 121-149 (RRRHRSRSRSRSRGRDRRSRSRSRSKSKR). RRM domains lie at 214–297 (RRVY…RPTD), 334–412 (DRIF…RANQ), and 453–539 (QVVS…YPEN).

Belongs to the splicing factor SR family.

The protein resides in the nucleus. Functionally, necessary for the splicing of pre-mRNA. In Oryza sativa subsp. japonica (Rice), this protein is Splicing factor U2af large subunit B (U2AF65B).